The chain runs to 426 residues: Synaptotagmin-13 (426 aa).

Residues 1–6 (MVLSVP) lie on the Vesicular side of the membrane. A helical transmembrane segment spans residues 7-29 (VIALGATLGTATSILALCGVTCL). At 30–426 (CRHMHPKKGL…QIAMWHQLHL (397 aa)) the chain is on the cytoplasmic side. C2 domains follow at residues 158–275 (QAPK…AQWG) and 287–422 (GAGE…AMWH).

Belongs to the synaptotagmin family. In terms of assembly, interacts with NRXN1. In terms of tissue distribution, expressed in brain, heart, spleen, lung and testis.

It localises to the cytoplasmic vesicle membrane. In terms of biological role, may be involved in transport vesicle docking to the plasma membrane. This chain is Synaptotagmin-13 (Syt13), found in Mus musculus (Mouse).